Reading from the N-terminus, the 426-residue chain is 3-phosphoshikimate 1-carboxyvinyltransferase (426 aa).

3 residues coordinate 3-phosphoshikimate: lysine 22, serine 23, and arginine 27. Lysine 22 contributes to the phosphoenolpyruvate binding site. Phosphoenolpyruvate contacts are provided by glycine 96 and arginine 124. 7 residues coordinate 3-phosphoshikimate: serine 170, serine 171, glutamine 172, serine 198, aspartate 314, asparagine 337, and lysine 341. A phosphoenolpyruvate-binding site is contributed by glutamine 172. The active-site Proton acceptor is aspartate 314. Phosphoenolpyruvate is bound by residues arginine 345, arginine 387, and lysine 412.

This sequence belongs to the EPSP synthase family. Monomer.

It localises to the cytoplasm. The enzyme catalyses 3-phosphoshikimate + phosphoenolpyruvate = 5-O-(1-carboxyvinyl)-3-phosphoshikimate + phosphate. The protein operates within metabolic intermediate biosynthesis; chorismate biosynthesis; chorismate from D-erythrose 4-phosphate and phosphoenolpyruvate: step 6/7. Catalyzes the transfer of the enolpyruvyl moiety of phosphoenolpyruvate (PEP) to the 5-hydroxyl of shikimate-3-phosphate (S3P) to produce enolpyruvyl shikimate-3-phosphate and inorganic phosphate. The protein is 3-phosphoshikimate 1-carboxyvinyltransferase of Shewanella oneidensis (strain ATCC 700550 / JCM 31522 / CIP 106686 / LMG 19005 / NCIMB 14063 / MR-1).